The sequence spans 115 residues: Protein E6A (115 aa).

The first 25 residues, 1-25 (MTDKFYFYGLFWGILLFVFLQHMQG), serve as a signal peptide directing secretion.

The sequence is that of Protein E6A (12) from Equine herpesvirus 2 (strain 86/87) (EHV-2).